The sequence spans 177 residues: Chorismate pyruvate-lyase (177 aa).

Methionine 37, arginine 79, leucine 117, and glutamate 159 together coordinate substrate.

This sequence belongs to the UbiC family. In terms of assembly, monomer.

The protein localises to the cytoplasm. The catalysed reaction is chorismate = 4-hydroxybenzoate + pyruvate. It functions in the pathway cofactor biosynthesis; ubiquinone biosynthesis. Its function is as follows. Removes the pyruvyl group from chorismate, with concomitant aromatization of the ring, to provide 4-hydroxybenzoate (4HB) for the ubiquinone pathway. This chain is Chorismate pyruvate-lyase, found in Sodalis glossinidius (strain morsitans).